Here is a 475-residue protein sequence, read N- to C-terminus: Ribulose bisphosphate carboxylase large chain (475 aa).

Positions 1–2 (MA) are excised as a propeptide. Pro-3 carries the N-acetylproline modification. Residue Lys-14 is modified to N6,N6,N6-trimethyllysine. Asn-123 and Thr-173 together coordinate substrate. The Proton acceptor role is filled by Lys-175. Residue Lys-177 coordinates substrate. Residues Lys-201, Asp-203, and Glu-204 each contribute to the Mg(2+) site. The residue at position 201 (Lys-201) is an N6-carboxylysine. His-294 serves as the catalytic Proton acceptor. Substrate is bound by residues Arg-295, His-327, and Ser-379.

The protein belongs to the RuBisCO large chain family. Type I subfamily. Heterohexadecamer of 8 large chains and 8 small chains; disulfide-linked. The disulfide link is formed within the large subunit homodimers. Mg(2+) serves as cofactor. The disulfide bond which can form in the large chain dimeric partners within the hexadecamer appears to be associated with oxidative stress and protein turnover.

The protein resides in the plastid. It is found in the chloroplast. The enzyme catalyses 2 (2R)-3-phosphoglycerate + 2 H(+) = D-ribulose 1,5-bisphosphate + CO2 + H2O. It catalyses the reaction D-ribulose 1,5-bisphosphate + O2 = 2-phosphoglycolate + (2R)-3-phosphoglycerate + 2 H(+). RuBisCO catalyzes two reactions: the carboxylation of D-ribulose 1,5-bisphosphate, the primary event in carbon dioxide fixation, as well as the oxidative fragmentation of the pentose substrate in the photorespiration process. Both reactions occur simultaneously and in competition at the same active site. This chain is Ribulose bisphosphate carboxylase large chain, found in Oedogonium cardiacum (Filamentous green alga).